We begin with the raw amino-acid sequence, 170 residues long: Transcription factor E (170 aa).

Residues 1–93 (MKEAYLYIVE…TWYVDDDVIR (93 aa)) enclose the HTH TFE/IIEalpha-type domain.

The protein belongs to the TFE family. Monomer. Interaction with RNA polymerase subunits RpoF and RpoE is necessary for Tfe stimulatory transcription activity. Able to interact with Tbp and RNA polymerase in the absence of DNA promoter. Interacts both with the preinitiation and elongation complexes.

Transcription factor that plays a role in the activation of archaeal genes transcribed by RNA polymerase. Facilitates transcription initiation by enhancing TATA-box recognition by TATA-box-binding protein (Tbp), and transcription factor B (Tfb) and RNA polymerase recruitment. Not absolutely required for transcription in vitro, but particularly important in cases where Tbp or Tfb function is not optimal. It dynamically alters the nucleic acid-binding properties of RNA polymerases by stabilizing the initiation complex and destabilizing elongation complexes. Seems to translocate with the RNA polymerase following initiation and acts by binding to the non template strand of the transcription bubble in elongation complexes. The chain is Transcription factor E from Pyrobaculum neutrophilum (strain DSM 2338 / JCM 9278 / NBRC 100436 / V24Sta) (Thermoproteus neutrophilus).